The primary structure comprises 334 residues: B3 domain-containing protein LOC_Os12g40090 (334 aa).

Positions 5–102 (RIRFFRLMTG…SFDVLIFDAS (98 aa)) form a DNA-binding region, TF-B3 1. A disordered region spans residues 142–178 (TSTPSVLIGSPHKASTSKKLSGKTKTNPRKEPEDPNC). The span at 154–166 (KASTSKKLSGKTK) shows a compositional bias: low complexity. Residues 227–326 (FVVVLQTAHV…TMTVHVIGKA (100 aa)) constitute a DNA-binding region (TF-B3 2).

Its subcellular location is the nucleus. This chain is B3 domain-containing protein LOC_Os12g40090, found in Oryza sativa subsp. japonica (Rice).